The following is a 249-amino-acid chain: Probable transcriptional regulatory protein IL1088 (249 aa).

It belongs to the TACO1 family.

The protein resides in the cytoplasm. In Idiomarina loihiensis (strain ATCC BAA-735 / DSM 15497 / L2-TR), this protein is Probable transcriptional regulatory protein IL1088.